The primary structure comprises 308 residues: Ribosomal RNA large subunit methyltransferase F (308 aa).

This sequence belongs to the methyltransferase superfamily. METTL16/RlmF family.

Its subcellular location is the cytoplasm. It carries out the reaction adenosine(1618) in 23S rRNA + S-adenosyl-L-methionine = N(6)-methyladenosine(1618) in 23S rRNA + S-adenosyl-L-homocysteine + H(+). Its function is as follows. Specifically methylates the adenine in position 1618 of 23S rRNA. In Escherichia coli O6:H1 (strain CFT073 / ATCC 700928 / UPEC), this protein is Ribosomal RNA large subunit methyltransferase F.